Reading from the N-terminus, the 170-residue chain is MYTSKQPFLKSKQPFSKSKQTFNKSKQPFRKSKQTFRKFKQPFRKSKQPFRRRPRIGPGDRIDYRNMSLINRFISEQGKILSRRINRLTLKQQRLITLAIKQARILSFLPFRNYENEKQFQAQSISIITGSRPRKNRHIPQLTQKYNSNRNLRNYNQNLRNNNRNLSSDC.

The disordered stretch occupies residues 1–61; that stretch reads MYTSKQPFLK…RRPRIGPGDR (61 aa). Residues 13–26 are compositionally biased toward polar residues; sequence QPFSKSKQTFNKSK. The segment covering 27-55 has biased composition (basic residues); the sequence is QPFRKSKQTFRKFKQPFRKSKQPFRRRPR.

It belongs to the bacterial ribosomal protein bS18 family. In terms of assembly, part of the 30S ribosomal subunit.

The protein resides in the plastid. It localises to the chloroplast. The protein is Small ribosomal subunit protein bS18c of Hordeum vulgare (Barley).